The chain runs to 270 residues: Fluoride-specific ion channel FluC 1 (270 aa).

Transmembrane regions (helical) follow at residues 4–24 (IIIL…FIML), 35–55 (LDIL…TALY), 67–87 (IIGT…YGSV), and 96–116 (AFLI…VAVL). Na(+) contacts are provided by Gly74 and Ser77.

This sequence belongs to the fluoride channel Fluc/FEX (TC 1.A.43) family.

Its subcellular location is the cell inner membrane. The enzyme catalyses fluoride(in) = fluoride(out). With respect to regulation, na(+) is not transported, but it plays an essential structural role and its presence is essential for fluoride channel function. Fluoride-specific ion channel. Important for reducing fluoride concentration in the cell, thus reducing its toxicity. This is Fluoride-specific ion channel FluC 1 from Brucella abortus biovar 1 (strain 9-941).